The chain runs to 151 residues: Caveolin-3 (151 aa).

Over M1–P83 the chain is Cytoplasmic. K38 participates in a covalent cross-link: Glycyl lysine isopeptide (Lys-Gly) (interchain with G-Cter in SUMO3). The tract at residues T64 to I114 is required for interaction with DAG1. Residues L84–V104 constitute an intramembrane region (helical). The Cytoplasmic portion of the chain corresponds to P105–V151.

Belongs to the caveolin family. In terms of assembly, homooligomer. Interacts with DYSF. Interacts with DLG1 and KCNA5; forms a ternary complex. Interacts with DAG1 (via its C-terminal); the interaction prevents binding of DAG1 with DMD. Interacts with TRIM72. Interacts with MUSK; may regulate MUSK signaling. Interacts with POPDC1. Interacts with CAVIN1, CAVIN2 and CAVIN4. Sumoylation with SUMO3 by PIAS4 may reduce agonist-induced internalization and desensitization of adrenergic receptor ABRD2.

Its subcellular location is the golgi apparatus membrane. It is found in the cell membrane. The protein localises to the membrane. The protein resides in the caveola. It localises to the sarcolemma. Its function is as follows. May act as a scaffolding protein within caveolar membranes. Interacts directly with G-protein alpha subunits and can functionally regulate their activity. May also regulate voltage-gated potassium channels. Plays a role in the sarcolemma repair mechanism of both skeletal muscle and cardiomyocytes that permits rapid resealing of membranes disrupted by mechanical stress. Mediates the recruitment of CAVIN2 and CAVIN3 proteins to the caveolae. This chain is Caveolin-3 (CAV3), found in Bos taurus (Bovine).